The chain runs to 259 residues: Phosphatidylglycerol--prolipoprotein diacylglyceryl transferase (259 aa).

The next 4 helical transmembrane spans lie at 12–32 (LAIHWYALCILSGLVLAVYLA), 41–61 (ISSDAIFDFILIAFPLAIVGA), 80–100 (IIAIWNGGIAIYGGLITGALV), and 109–129 (VLNPIHFLDIAAPSVMAAQAI). Arginine 131 contacts a 1,2-diacyl-sn-glycero-3-phospho-(1'-sn-glycerol). 3 consecutive transmembrane segments (helical) span residues 167-187 (IPTFLYESFWNLLGFVIIMMW), 194-214 (LLDGEIFAFYLIWYGSGRLVI), and 226-246 (GIRISQYVSALLIIIGLIFVI).

Belongs to the Lgt family.

The protein localises to the cell membrane. The catalysed reaction is L-cysteinyl-[prolipoprotein] + a 1,2-diacyl-sn-glycero-3-phospho-(1'-sn-glycerol) = an S-1,2-diacyl-sn-glyceryl-L-cysteinyl-[prolipoprotein] + sn-glycerol 1-phosphate + H(+). It functions in the pathway protein modification; lipoprotein biosynthesis (diacylglyceryl transfer). Catalyzes the transfer of the diacylglyceryl group from phosphatidylglycerol to the sulfhydryl group of the N-terminal cysteine of a prolipoprotein, the first step in the formation of mature lipoproteins. The chain is Phosphatidylglycerol--prolipoprotein diacylglyceryl transferase from Streptococcus pyogenes serotype M3 (strain ATCC BAA-595 / MGAS315).